We begin with the raw amino-acid sequence, 215 residues long: Uracil-DNA glycosylase (215 aa).

Aspartate 59 acts as the Proton acceptor in catalysis.

Belongs to the uracil-DNA glycosylase (UDG) superfamily. UNG family.

Its subcellular location is the cytoplasm. It carries out the reaction Hydrolyzes single-stranded DNA or mismatched double-stranded DNA and polynucleotides, releasing free uracil.. In terms of biological role, excises uracil residues from the DNA which can arise as a result of misincorporation of dUMP residues by DNA polymerase or due to deamination of cytosine. This Aliarcobacter butzleri (strain RM4018) (Arcobacter butzleri) protein is Uracil-DNA glycosylase.